The chain runs to 323 residues: Transcription factor MYB108 (323 aa).

2 consecutive HTH myb-type domains span residues 16-68 (EMDL…LNYL) and 69-123 (RPDV…QKHA). 2 DNA-binding regions (H-T-H motif) span residues 44-68 (WNSLSRCAGLQRTGKSCRLRWLNYL) and 96-119 (WSKIAQYLPGRTDNEIKNYWRTRV).

In terms of assembly, interacts with BOI, but not with BRG1. In terms of processing, ubiquitinated in vitro by BOI. Expressed specifically in flowers. Restricted to anthers in maturing flowers. Strongest expression in the vascular and connective tissue where the anther attaches to the filament. Not detected in pollen.

The protein localises to the nucleus. Transcription factor contributing to the regulation of stamen maturation and male fertility in response to jasmonate signaling. Required for correct timing of anther dehiscence. Acts as a negative regulator of abscisic acid-induced cell death. Not involved in the regulation of BOI. Regulated by MYB21 and at a lower level by MYB24. Negatively regulated by the proteasome in an SCF(COI1) E3 ubiquitin-protein ligase complex-dependent manner. The chain is Transcription factor MYB108 (MYB108) from Arabidopsis thaliana (Mouse-ear cress).